We begin with the raw amino-acid sequence, 321 residues long: Glycerol-3-phosphate dehydrogenase [NAD(P)+] (321 aa).

The NADPH site is built by Trp15, Arg35, and Lys101. 2 residues coordinate sn-glycerol 3-phosphate: Lys101 and Gly129. NADPH is bound at residue Ala133. Residues Lys184, Asp237, Ser247, Arg248, and Asn249 each coordinate sn-glycerol 3-phosphate. The Proton acceptor role is filled by Lys184. Residue Arg248 coordinates NADPH. Positions 268 and 270 each coordinate NADPH.

This sequence belongs to the NAD-dependent glycerol-3-phosphate dehydrogenase family.

Its subcellular location is the cytoplasm. The enzyme catalyses sn-glycerol 3-phosphate + NAD(+) = dihydroxyacetone phosphate + NADH + H(+). It carries out the reaction sn-glycerol 3-phosphate + NADP(+) = dihydroxyacetone phosphate + NADPH + H(+). It participates in membrane lipid metabolism; glycerophospholipid metabolism. Catalyzes the reduction of the glycolytic intermediate dihydroxyacetone phosphate (DHAP) to sn-glycerol 3-phosphate (G3P), the key precursor for phospholipid synthesis. The chain is Glycerol-3-phosphate dehydrogenase [NAD(P)+] from Acidiphilium cryptum (strain JF-5).